Reading from the N-terminus, the 284-residue chain is Asialoglycoprotein receptor 1 (284 aa).

At 1 to 39 (MTKDYQDFQHLDNENDHHQLQRGPPPAPRLLQRLCSGFR) the chain is on the cytoplasmic side. The Endocytosis signal motif lies at 5–8 (YQDF). Cys-35 is lipidated: S-palmitoyl cysteine. A helical; Signal-anchor for type II membrane protein membrane pass occupies residues 40–60 (LFLLSLGLSILLLVVVCVITS). Residues 58–122 (ITSQNSQLRE…EDLREDHSRL (65 aa)) adopt a coiled-coil conformation. At 61-284 (QNSQLREDLR…VCETELGKAN (224 aa)) the chain is on the extracellular side. N-linked (GlcNAc...) asparagine glycosylation is found at Asn-75, Asn-78, and Asn-146. 3 disulfides stabilise this stretch: Cys-153/Cys-164, Cys-181/Cys-276, and Cys-254/Cys-268. Positions 160–277 (YEGSCYWFSS…CRRPYRWVCE (118 aa)) constitute a C-type lectin domain. Residues Val-190, Glu-196, Asp-215, Gln-239, Asp-241, Asp-242, Glu-252, Asp-253, Asn-264, Asp-265, and Glu-277 each contribute to the Ca(2+) site.

Interacts with LASS2. In terms of processing, phosphorylated on a cytoplasmic Ser residue. As to expression, expressed exclusively in hepatic parenchymal cells.

It is found in the membrane. Mediates the endocytosis of plasma glycoproteins to which the terminal sialic acid residue on their complex carbohydrate moieties has been removed. The receptor recognizes terminal galactose and N-acetylgalactosamine units. After ligand binding to the receptor, the resulting complex is internalized and transported to a sorting organelle, where receptor and ligand are disassociated. The receptor then returns to the cell membrane surface. The polypeptide is Asialoglycoprotein receptor 1 (Asgr1) (Rattus norvegicus (Rat)).